We begin with the raw amino-acid sequence, 611 residues long: Dihydroxy-acid dehydratase (611 aa).

Asp81 contacts Mg(2+). Residue Cys122 coordinates [2Fe-2S] cluster. Residues Asp123 and Lys124 each coordinate Mg(2+). At Lys124 the chain carries N6-carboxylysine. Residue Cys195 coordinates [2Fe-2S] cluster. Glu491 contributes to the Mg(2+) binding site. Ser517 acts as the Proton acceptor in catalysis.

The protein belongs to the IlvD/Edd family. As to quaternary structure, homodimer. The cofactor is [2Fe-2S] cluster. Mg(2+) is required as a cofactor.

The catalysed reaction is (2R)-2,3-dihydroxy-3-methylbutanoate = 3-methyl-2-oxobutanoate + H2O. It carries out the reaction (2R,3R)-2,3-dihydroxy-3-methylpentanoate = (S)-3-methyl-2-oxopentanoate + H2O. Its pathway is amino-acid biosynthesis; L-isoleucine biosynthesis; L-isoleucine from 2-oxobutanoate: step 3/4. It participates in amino-acid biosynthesis; L-valine biosynthesis; L-valine from pyruvate: step 3/4. Its function is as follows. Functions in the biosynthesis of branched-chain amino acids. Catalyzes the dehydration of (2R,3R)-2,3-dihydroxy-3-methylpentanoate (2,3-dihydroxy-3-methylvalerate) into 2-oxo-3-methylpentanoate (2-oxo-3-methylvalerate) and of (2R)-2,3-dihydroxy-3-methylbutanoate (2,3-dihydroxyisovalerate) into 2-oxo-3-methylbutanoate (2-oxoisovalerate), the penultimate precursor to L-isoleucine and L-valine, respectively. The sequence is that of Dihydroxy-acid dehydratase from Brucella canis (strain ATCC 23365 / NCTC 10854 / RM-666).